We begin with the raw amino-acid sequence, 674 residues long: MSKVFKLNSEFKPAGDQPEAIRRLEEGLEDGLAHQTLLGVTGSGKTFTVANVIADLNRPTMVLAPNKTLAAQLYGEMKEFFPDNAVEYFVSYYDYYQPEAYVPSSDTFIEKDASVNEHIEQMRLSATKALLERRDVVVVASVSAIYGLGDPDLYLKMMLHLSRGMVIDQRAILRRLAELQYTRNDQAFQRGTFRVRGEVIDIFPAESDDYALRVELFDEEVERLSIFDPLTGQIESVIPRYTIYPKTHYVTPRERILQAMEEIKDELVERKKVLLDNNKLLEEQRLSQRTQFDLEMMNELGYCSGIENYSRYLSGRGPGEAPPTLFDYLPADGLLVIDESHVTIPQIGGMYRGDRARKETLVEYGFRLPSALDNRPMKFEEFEGLAPQTIYVSATPGNYELEKSGGEVIDQVVRPTGLLDPIVEVRPVGTQVDDLLSEIRQRVAINERVLVTVLTKRMAEDLTEYLTEHGERVRYLHSDIDTVERVEIIRDLRLGKFDVLVGINLLREGLDMPEVSLVAILDADKEGFLRSERSLIQTIGRAARNLNGKAILYGDKITPSMARAIGETERRREKQQLHNEEHGIVPQGLNKKISDILELGQGLAKNKAKPRNMKGRSIVEDDPAHVDLTPQGLQKRIHQLEAQMQQHAQNLEFEEAAQVRDQLHQVRELFIAAS.

Residues 26–183 enclose the Helicase ATP-binding domain; sequence EGLEDGLAHQ…RRLAELQYTR (158 aa). 39 to 46 is an ATP binding site; the sequence is GVTGSGKT. A Beta-hairpin motif is present at residues 92–115; the sequence is YYDYYQPEAYVPSSDTFIEKDASV. Residues 431 to 597 enclose the Helicase C-terminal domain; it reads QVDDLLSEIR…GLNKKISDIL (167 aa). The 36-residue stretch at 634–669 folds into the UVR domain; sequence QKRIHQLEAQMQQHAQNLEFEEAAQVRDQLHQVREL.

This sequence belongs to the UvrB family. Forms a heterotetramer with UvrA during the search for lesions. Interacts with UvrC in an incision complex.

The protein localises to the cytoplasm. Functionally, the UvrABC repair system catalyzes the recognition and processing of DNA lesions. A damage recognition complex composed of 2 UvrA and 2 UvrB subunits scans DNA for abnormalities. Upon binding of the UvrA(2)B(2) complex to a putative damaged site, the DNA wraps around one UvrB monomer. DNA wrap is dependent on ATP binding by UvrB and probably causes local melting of the DNA helix, facilitating insertion of UvrB beta-hairpin between the DNA strands. Then UvrB probes one DNA strand for the presence of a lesion. If a lesion is found the UvrA subunits dissociate and the UvrB-DNA preincision complex is formed. This complex is subsequently bound by UvrC and the second UvrB is released. If no lesion is found, the DNA wraps around the other UvrB subunit that will check the other stand for damage. The polypeptide is UvrABC system protein B (Erwinia tasmaniensis (strain DSM 17950 / CFBP 7177 / CIP 109463 / NCPPB 4357 / Et1/99)).